Here is a 379-residue protein sequence, read N- to C-terminus: ATP phosphoribosyltransferase regulatory subunit (379 aa).

Belongs to the class-II aminoacyl-tRNA synthetase family. HisZ subfamily. Heteromultimer composed of HisG and HisZ subunits.

It localises to the cytoplasm. The protein operates within amino-acid biosynthesis; L-histidine biosynthesis; L-histidine from 5-phospho-alpha-D-ribose 1-diphosphate: step 1/9. Its function is as follows. Required for the first step of histidine biosynthesis. May allow the feedback regulation of ATP phosphoribosyltransferase activity by histidine. This is ATP phosphoribosyltransferase regulatory subunit from Caldanaerobacter subterraneus subsp. tengcongensis (strain DSM 15242 / JCM 11007 / NBRC 100824 / MB4) (Thermoanaerobacter tengcongensis).